A 60-amino-acid polypeptide reads, in one-letter code: Large ribosomal subunit protein uL30 (60 aa).

This sequence belongs to the universal ribosomal protein uL30 family. As to quaternary structure, part of the 50S ribosomal subunit.

The polypeptide is Large ribosomal subunit protein uL30 (Albidiferax ferrireducens (strain ATCC BAA-621 / DSM 15236 / T118) (Rhodoferax ferrireducens)).